We begin with the raw amino-acid sequence, 775 residues long: Transcription activator of gluconeogenesis HCBG_00867 (775 aa).

The disordered stretch occupies residues 1–70 (MTASTQNGSP…NAKDPLRPRR (70 aa)). Polar residues-rich tracts occupy residues 21-41 (NQES…QSPA) and 48-60 (TAES…STAA). Residues 77 to 105 (CFACQRAHLTCGDERPCQRCIKRGLQDAC) constitute a DNA-binding region (zn(2)-C6 fungal-type). 4 disordered regions span residues 179-248 (TQAK…PFGA), 286-351 (GAGD…NIYN), 556-592 (NLNV…AGGG), and 649-725 (QGKE…SPKQ). The span at 195–217 (MQDTSINPSAFQAPSPTSTPNFD) shows a compositional bias: polar residues. The segment covering 218 to 229 (LSSNPPNRNLSS) has biased composition (low complexity). Polar residues-rich tracts occupy residues 230–244 (AMTQ…QTQD), 292–323 (PSDS…TQSP), 334–351 (WNPS…NIYN), and 557–576 (LNVN…TPRN). The segment covering 657 to 668 (GSDGKGGGGGGD) has biased composition (gly residues). Over residues 669-713 (VAATAATTSTSTSNGANSSGHANANRNNTNPKNSSPPSSSSAAAA) the composition is skewed to low complexity.

The protein belongs to the ERT1/acuK family.

It localises to the nucleus. Its function is as follows. Transcription factor which regulates nonfermentable carbon utilization. Activator of gluconeogenetic genes. The chain is Transcription activator of gluconeogenesis HCBG_00867 from Ajellomyces capsulatus (strain G186AR / H82 / ATCC MYA-2454 / RMSCC 2432) (Darling's disease fungus).